The sequence spans 232 residues: Urease accessory protein UreF (232 aa).

This sequence belongs to the UreF family. As to quaternary structure, ureD, UreF and UreG form a complex that acts as a GTP-hydrolysis-dependent molecular chaperone, activating the urease apoprotein by helping to assemble the nickel containing metallocenter of UreC. The UreE protein probably delivers the nickel.

The protein localises to the cytoplasm. Required for maturation of urease via the functional incorporation of the urease nickel metallocenter. The polypeptide is Urease accessory protein UreF (Azorhizobium caulinodans (strain ATCC 43989 / DSM 5975 / JCM 20966 / LMG 6465 / NBRC 14845 / NCIMB 13405 / ORS 571)).